Here is a 340-residue protein sequence, read N- to C-terminus: Ferredoxin--NADP reductase (340 aa).

Positions 20, 39, 47, 52, 92, 126, 293, and 334 each coordinate FAD.

It belongs to the ferredoxin--NADP reductase type 2 family. As to quaternary structure, homodimer. Requires FAD as cofactor.

The enzyme catalyses 2 reduced [2Fe-2S]-[ferredoxin] + NADP(+) + H(+) = 2 oxidized [2Fe-2S]-[ferredoxin] + NADPH. This chain is Ferredoxin--NADP reductase, found in Gluconobacter oxydans (strain 621H) (Gluconobacter suboxydans).